The following is a 393-amino-acid chain: Formate-dependent phosphoribosylglycinamide formyltransferase (393 aa).

N(1)-(5-phospho-beta-D-ribosyl)glycinamide contacts are provided by residues 22 to 23 and E82; that span reads EL. ATP is bound by residues R114, K155, 160–165, 195–198, and E203; these read SSGKGQ and EGFI. In terms of domain architecture, ATP-grasp spans 119 to 308; the sequence is RLAAEELDLP…QFALHARAIL (190 aa). E267 and E279 together coordinate Mg(2+). N(1)-(5-phospho-beta-D-ribosyl)glycinamide is bound by residues D286, K356, and 363–364; that span reads RR.

It belongs to the PurK/PurT family. As to quaternary structure, homodimer.

It carries out the reaction N(1)-(5-phospho-beta-D-ribosyl)glycinamide + formate + ATP = N(2)-formyl-N(1)-(5-phospho-beta-D-ribosyl)glycinamide + ADP + phosphate + H(+). It participates in purine metabolism; IMP biosynthesis via de novo pathway; N(2)-formyl-N(1)-(5-phospho-D-ribosyl)glycinamide from N(1)-(5-phospho-D-ribosyl)glycinamide (formate route): step 1/1. Involved in the de novo purine biosynthesis. Catalyzes the transfer of formate to 5-phospho-ribosyl-glycinamide (GAR), producing 5-phospho-ribosyl-N-formylglycinamide (FGAR). Formate is provided by PurU via hydrolysis of 10-formyl-tetrahydrofolate. This Pseudomonas putida (strain W619) protein is Formate-dependent phosphoribosylglycinamide formyltransferase.